The following is a 189-amino-acid chain: Ribosome maturation factor RimM (189 aa).

The 72-residue stretch at 118–189 (SGEYYWDDLI…IILVDWDENF (72 aa)) folds into the PRC barrel domain.

Belongs to the RimM family. Binds ribosomal protein uS19.

It localises to the cytoplasm. Functionally, an accessory protein needed during the final step in the assembly of 30S ribosomal subunit, possibly for assembly of the head region. Essential for efficient processing of 16S rRNA. May be needed both before and after RbfA during the maturation of 16S rRNA. It has affinity for free ribosomal 30S subunits but not for 70S ribosomes. In Ruthia magnifica subsp. Calyptogena magnifica, this protein is Ribosome maturation factor RimM.